The chain runs to 215 residues: MTSFSKSDTCVIFGGSFNPPHIGHTVILSYALDYFNADFYIIPTKTPPHKVVDIDFDKRFEWVMKSFKCFDTYKKNQIFLWDLEKHIFGVNYAIKNVEYFRKYYSNTIILVGEDALGNIEKWYKYEELLNITTFAIYPRTRDGSLYKRGQQILGNLYSNVIELRDFPLIEISSSDIRKRIVEGKSIIGFVDGEILEDVTNTYLMHHKSHGGNWNE.

This sequence belongs to the NadD family.

The enzyme catalyses nicotinate beta-D-ribonucleotide + ATP + H(+) = deamido-NAD(+) + diphosphate. The protein operates within cofactor biosynthesis; NAD(+) biosynthesis; deamido-NAD(+) from nicotinate D-ribonucleotide: step 1/1. Functionally, catalyzes the reversible adenylation of nicotinate mononucleotide (NaMN) to nicotinic acid adenine dinucleotide (NaAD). The chain is Probable nicotinate-nucleotide adenylyltransferase from Fervidobacterium nodosum (strain ATCC 35602 / DSM 5306 / Rt17-B1).